We begin with the raw amino-acid sequence, 562 residues long: MRSDMIKKGDHQAPARSLLHATGALKQPTDMNKPFVAICNSYIDIVPGHVHLRELADIAKEAIREAGAIPFEFNTIGVDDGIAMGHIGMRYSLPSREIIADAAETVINAHWFDGVFYIPNCDKITPGMLLAAVRTNVPAIFCSGGPMKAGLSAQGKALTLSSMFEAVGAFKEGTISKEAFLDMEQNACPTCGSCAGMFTANSMNCLMEVLGLALPYNGTALAVSDQRREMIRQAAFRLVENIKNDIKPRDIITQDAIDDAFALDMAMGGSTNTVLHTLAIANEAGIDYDLERINEIAKKTPYLSKIAPSSSYSMHDVHEAGGVPAIINELMKKDGTLHPDRLTVTGKTLRENNEGKNIKNFDVIHPLENPYDKQGGLSVLFGNLAPKGAVIKVGGVDPSIKVFTGKAICFNSHDEAVEAIDNHTVREGHVVVIRYEGPKGGPGMPEMLAPTSSIVGRGLGKDVALITDGRFSGATRGIAVGHISPEAASGGPIGLIRDGDKITIDLINRTLNVNQSEEELYRRKNQLEPFRAKVKTGYLARYTSLVTSANTGGIMQVPENLI.

Position 80 (Asp-80) interacts with Mg(2+). Residue Cys-121 participates in [2Fe-2S] cluster binding. Positions 122 and 123 each coordinate Mg(2+). N6-carboxylysine is present on Lys-123. Cys-194 lines the [2Fe-2S] cluster pocket. Glu-446 serves as a coordination point for Mg(2+). Catalysis depends on Ser-472, which acts as the Proton acceptor.

This sequence belongs to the IlvD/Edd family. Homodimer. [2Fe-2S] cluster is required as a cofactor. It depends on Mg(2+) as a cofactor.

It carries out the reaction (2R)-2,3-dihydroxy-3-methylbutanoate = 3-methyl-2-oxobutanoate + H2O. The catalysed reaction is (2R,3R)-2,3-dihydroxy-3-methylpentanoate = (S)-3-methyl-2-oxopentanoate + H2O. It functions in the pathway amino-acid biosynthesis; L-isoleucine biosynthesis; L-isoleucine from 2-oxobutanoate: step 3/4. Its pathway is amino-acid biosynthesis; L-valine biosynthesis; L-valine from pyruvate: step 3/4. Functionally, functions in the biosynthesis of branched-chain amino acids. Catalyzes the dehydration of (2R,3R)-2,3-dihydroxy-3-methylpentanoate (2,3-dihydroxy-3-methylvalerate) into 2-oxo-3-methylpentanoate (2-oxo-3-methylvalerate) and of (2R)-2,3-dihydroxy-3-methylbutanoate (2,3-dihydroxyisovalerate) into 2-oxo-3-methylbutanoate (2-oxoisovalerate), the penultimate precursor to L-isoleucine and L-valine, respectively. In Staphylococcus epidermidis (strain ATCC 35984 / DSM 28319 / BCRC 17069 / CCUG 31568 / BM 3577 / RP62A), this protein is Dihydroxy-acid dehydratase.